A 393-amino-acid chain; its full sequence is Arginine biosynthesis bifunctional protein ArgJ 3 (393 aa).

Positions 148, 170, 181, 260, 388, and 393 each coordinate substrate. The Nucleophile role is filled by Thr181.

This sequence belongs to the ArgJ family. Heterotetramer of two alpha and two beta chains.

It localises to the cytoplasm. The enzyme catalyses N(2)-acetyl-L-ornithine + L-glutamate = N-acetyl-L-glutamate + L-ornithine. It carries out the reaction L-glutamate + acetyl-CoA = N-acetyl-L-glutamate + CoA + H(+). The protein operates within amino-acid biosynthesis; L-arginine biosynthesis; L-ornithine and N-acetyl-L-glutamate from L-glutamate and N(2)-acetyl-L-ornithine (cyclic): step 1/1. It participates in amino-acid biosynthesis; L-arginine biosynthesis; N(2)-acetyl-L-ornithine from L-glutamate: step 1/4. Its function is as follows. Catalyzes two activities which are involved in the cyclic version of arginine biosynthesis: the synthesis of N-acetylglutamate from glutamate and acetyl-CoA as the acetyl donor, and of ornithine by transacetylation between N(2)-acetylornithine and glutamate. This chain is Arginine biosynthesis bifunctional protein ArgJ 3, found in Streptomyces clavuligerus.